A 34-amino-acid chain; its full sequence is U1-poneritoxin-Na2a (34 aa).

As to expression, expressed by the venom gland.

It is found in the secreted. In terms of biological role, may have antimicrobial properties, like most ant linear peptides. The chain is U1-poneritoxin-Na2a from Neoponera apicalis (Ant).